The sequence spans 127 residues: Ribosome-binding factor A (127 aa).

It belongs to the RbfA family. As to quaternary structure, monomer. Binds 30S ribosomal subunits, but not 50S ribosomal subunits or 70S ribosomes.

The protein localises to the cytoplasm. In terms of biological role, one of several proteins that assist in the late maturation steps of the functional core of the 30S ribosomal subunit. Associates with free 30S ribosomal subunits (but not with 30S subunits that are part of 70S ribosomes or polysomes). Required for efficient processing of 16S rRNA. May interact with the 5'-terminal helix region of 16S rRNA. The polypeptide is Ribosome-binding factor A (Geobacillus kaustophilus (strain HTA426)).